Consider the following 238-residue polypeptide: 4-hydroxy-tetrahydrodipicolinate reductase (238 aa).

12–17 (GASGRM) lines the NAD(+) pocket. An NADP(+)-binding site is contributed by R40. Residues 93–95 (GTT) and 117–120 (ASNF) each bind NAD(+). Catalysis depends on H149, which acts as the Proton donor/acceptor. H150 provides a ligand contact to (S)-2,3,4,5-tetrahydrodipicolinate. K153 functions as the Proton donor in the catalytic mechanism. Position 159 to 160 (159 to 160 (GT)) interacts with (S)-2,3,4,5-tetrahydrodipicolinate.

This sequence belongs to the DapB family.

The protein resides in the cytoplasm. The enzyme catalyses (S)-2,3,4,5-tetrahydrodipicolinate + NAD(+) + H2O = (2S,4S)-4-hydroxy-2,3,4,5-tetrahydrodipicolinate + NADH + H(+). The catalysed reaction is (S)-2,3,4,5-tetrahydrodipicolinate + NADP(+) + H2O = (2S,4S)-4-hydroxy-2,3,4,5-tetrahydrodipicolinate + NADPH + H(+). The protein operates within amino-acid biosynthesis; L-lysine biosynthesis via DAP pathway; (S)-tetrahydrodipicolinate from L-aspartate: step 4/4. Functionally, catalyzes the conversion of 4-hydroxy-tetrahydrodipicolinate (HTPA) to tetrahydrodipicolinate. This is 4-hydroxy-tetrahydrodipicolinate reductase from Xanthomonas axonopodis pv. citri (strain 306).